The chain runs to 446 residues: Asparagine--tRNA ligase (446 aa).

It belongs to the class-II aminoacyl-tRNA synthetase family. Homodimer.

It localises to the cytoplasm. The enzyme catalyses tRNA(Asn) + L-asparagine + ATP = L-asparaginyl-tRNA(Asn) + AMP + diphosphate + H(+). The sequence is that of Asparagine--tRNA ligase from Sorangium cellulosum (strain So ce56) (Polyangium cellulosum (strain So ce56)).